The sequence spans 940 residues: Isoleucine--tRNA ligase (940 aa).

The short motif at 58-68 (PYANGSIHIGH) is the 'HIGH' region element. E564 provides a ligand contact to L-isoleucyl-5'-AMP. The 'KMSKS' region motif lies at 605-609 (KMSKS). ATP is bound at residue K608. The Zn(2+) site is built by C903, C906, C923, and C926.

This sequence belongs to the class-I aminoacyl-tRNA synthetase family. IleS type 1 subfamily. Monomer. Zn(2+) is required as a cofactor.

Its subcellular location is the cytoplasm. The enzyme catalyses tRNA(Ile) + L-isoleucine + ATP = L-isoleucyl-tRNA(Ile) + AMP + diphosphate. Its function is as follows. Catalyzes the attachment of isoleucine to tRNA(Ile). As IleRS can inadvertently accommodate and process structurally similar amino acids such as valine, to avoid such errors it has two additional distinct tRNA(Ile)-dependent editing activities. One activity is designated as 'pretransfer' editing and involves the hydrolysis of activated Val-AMP. The other activity is designated 'posttransfer' editing and involves deacylation of mischarged Val-tRNA(Ile). The polypeptide is Isoleucine--tRNA ligase (Shewanella sp. (strain ANA-3)).